The chain runs to 124 residues: Snaclec rhodocetin subunit delta (124 aa).

Cystine bridges form between Cys1–Cys12, Cys29–Cys120, and Cys95–Cys112. One can recognise a C-type lectin domain in the interval 8–121 (YNGYCYRVFS…CEKTVSFVCK (114 aa)).

It belongs to the snaclec family. In terms of assembly, heterotetramer of subunit alpha, beta, gamma and delta; only the gamma and the delta subunits are disulfide-linked. Alpha-beta heterodimer and gamma-delta heterodimer associate orthogonally, giving a cruciform conformation. This heterotetramer may covalently dimerizes thanks to the gamma subunit. As to expression, expressed by the venom gland.

Its subcellular location is the secreted. Its function is as follows. Potent inhibitor of collagen-induced platelet aggregation. It acts by binding to the integrin alpha2A domain and blocks collagen binding to integrin alpha-2/beta-1 (ITGA2/ITGB1). The gamma/delta subunits mainly contribute to this activity. This chain is Snaclec rhodocetin subunit delta, found in Calloselasma rhodostoma (Malayan pit viper).